Here is a 287-residue protein sequence, read N- to C-terminus: Pantothenate synthetase (287 aa).

Position 30-37 (30-37 (MGNLHSGH)) interacts with ATP. The active-site Proton donor is His37. (R)-pantoate is bound at residue Gln61. Gln61 is a binding site for beta-alanine. 149–152 (GEKD) provides a ligand contact to ATP. (R)-pantoate is bound at residue Gln155. ATP-binding positions include Val178 and 186-189 (LSSR).

Belongs to the pantothenate synthetase family. Homodimer.

The protein localises to the cytoplasm. The enzyme catalyses (R)-pantoate + beta-alanine + ATP = (R)-pantothenate + AMP + diphosphate + H(+). Its pathway is cofactor biosynthesis; (R)-pantothenate biosynthesis; (R)-pantothenate from (R)-pantoate and beta-alanine: step 1/1. Catalyzes the condensation of pantoate with beta-alanine in an ATP-dependent reaction via a pantoyl-adenylate intermediate. This chain is Pantothenate synthetase, found in Pseudomonas putida (strain GB-1).